Here is a 490-residue protein sequence, read N- to C-terminus: Bifunctional protein HldE (490 aa).

A ribokinase region spans residues 1 to 330; it reads MFDFDDLSQA…RKILPHAYRA (330 aa). An ATP-binding site is contributed by 205–208; that stretch reads NRKE. Aspartate 275 is an active-site residue. Residues 358 to 490 are cytidylyltransferase; that stretch reads FTNGCFDILH…LVDRARSDQR (133 aa).

This sequence in the N-terminal section; belongs to the carbohydrate kinase PfkB family. The protein in the C-terminal section; belongs to the cytidylyltransferase family. As to quaternary structure, homodimer.

It carries out the reaction D-glycero-beta-D-manno-heptose 7-phosphate + ATP = D-glycero-beta-D-manno-heptose 1,7-bisphosphate + ADP + H(+). The enzyme catalyses D-glycero-beta-D-manno-heptose 1-phosphate + ATP + H(+) = ADP-D-glycero-beta-D-manno-heptose + diphosphate. It functions in the pathway nucleotide-sugar biosynthesis; ADP-L-glycero-beta-D-manno-heptose biosynthesis; ADP-L-glycero-beta-D-manno-heptose from D-glycero-beta-D-manno-heptose 7-phosphate: step 1/4. The protein operates within nucleotide-sugar biosynthesis; ADP-L-glycero-beta-D-manno-heptose biosynthesis; ADP-L-glycero-beta-D-manno-heptose from D-glycero-beta-D-manno-heptose 7-phosphate: step 3/4. Its function is as follows. Catalyzes the phosphorylation of D-glycero-D-manno-heptose 7-phosphate at the C-1 position to selectively form D-glycero-beta-D-manno-heptose-1,7-bisphosphate. Functionally, catalyzes the ADP transfer from ATP to D-glycero-beta-D-manno-heptose 1-phosphate, yielding ADP-D-glycero-beta-D-manno-heptose. In Bradyrhizobium sp. (strain ORS 278), this protein is Bifunctional protein HldE.